A 200-amino-acid polypeptide reads, in one-letter code: GTP cyclohydrolase 1 (200 aa).

3 residues coordinate Zn(2+): Cys-87, His-90, and Cys-158.

The protein belongs to the GTP cyclohydrolase I family. In terms of assembly, toroid-shaped homodecamer, composed of two pentamers of five dimers.

It carries out the reaction GTP + H2O = 7,8-dihydroneopterin 3'-triphosphate + formate + H(+). Its pathway is cofactor biosynthesis; 7,8-dihydroneopterin triphosphate biosynthesis; 7,8-dihydroneopterin triphosphate from GTP: step 1/1. In Xanthomonas campestris pv. campestris (strain ATCC 33913 / DSM 3586 / NCPPB 528 / LMG 568 / P 25), this protein is GTP cyclohydrolase 1.